A 376-amino-acid polypeptide reads, in one-letter code: Erythronate-4-phosphate dehydrogenase (376 aa).

Residues Ser45 and Thr67 each contribute to the substrate site. Position 147 (Asp147) interacts with NAD(+). Arg209 is a catalytic residue. Asp233 is an NAD(+) binding site. Glu238 is a catalytic residue. His255 acts as the Proton donor in catalysis. Gly258 contributes to the NAD(+) binding site. Tyr259 lines the substrate pocket.

This sequence belongs to the D-isomer specific 2-hydroxyacid dehydrogenase family. PdxB subfamily. As to quaternary structure, homodimer.

The protein localises to the cytoplasm. The catalysed reaction is 4-phospho-D-erythronate + NAD(+) = (R)-3-hydroxy-2-oxo-4-phosphooxybutanoate + NADH + H(+). Its pathway is cofactor biosynthesis; pyridoxine 5'-phosphate biosynthesis; pyridoxine 5'-phosphate from D-erythrose 4-phosphate: step 2/5. Catalyzes the oxidation of erythronate-4-phosphate to 3-hydroxy-2-oxo-4-phosphonooxybutanoate. In Shewanella sp. (strain MR-7), this protein is Erythronate-4-phosphate dehydrogenase.